A 614-amino-acid polypeptide reads, in one-letter code: Deoxynucleoside triphosphate triphosphohydrolase SAMHD1 (614 aa).

A compositionally biased stretch (low complexity) spans 1–13 (MGSPAAGWGAAPA). The interval 1–33 (MGSPAAGWGAAPAKRARREGSAESSCGSPADRD) is disordered. One can recognise an SAM domain in the interval 37–102 (WDTERLCQHL…LACLNQLRQT (66 aa)). 2 residues coordinate GTP: Lys107 and Val108. Asn110 serves as a coordination point for dGTP. Residues Asp128, Gln133, and Arg136 each coordinate GTP. DGTP contacts are provided by Gln140, Leu141, Val147, and Arg155. Gln140 lines the dATP pocket. Gln140 is a dCTP binding site. Gln140 lines the dTTP pocket. DATP is bound at residue Arg155. Arg155 provides a ligand contact to dCTP. Arg155 serves as a coordination point for dTTP. The 153-residue stretch at 155-307 (RFEHSLGVGY…GIDVDKWDYF (153 aa)) folds into the HD domain. The Mn(2+) site is built by His158, His197, and Asp198. His201 and His206 together coordinate dATP. DCTP contacts are provided by His201 and His206. DTTP contacts are provided by His201 and His206. Residue His224 is part of the active site. Residue Asp302 participates in Mn(2+) binding. 12 residues coordinate dGTP: Lys303, Tyr306, Asp310, Arg324, Arg343, Lys345, Asn349, Arg357, Tyr365, Gln366, His367, and Lys368. The dATP site is built by Lys303, Tyr306, and Asp310. DCTP-binding residues include Lys303, Tyr306, and Asp310. DTTP is bound by residues Lys303, Tyr306, and Asp310. Arg357 contacts dATP. Arg357 is a dCTP binding site. A dATP-binding site is contributed by Gln366. Gln366 contributes to the dCTP binding site. A dTTP-binding site is contributed by Gln366. GTP-binding residues include Arg442, Lys446, and Lys515. Lys515 contacts dGTP.

It belongs to the SAMHD1 family. Homodimer; in absence of GTP and dNTP. Homotetramer; in GTP- and dNTP-bound form. Interacts with rbbp8/CtIP. Requires Zn(2+) as cofactor.

It localises to the nucleus. The protein resides in the chromosome. It carries out the reaction a 2'-deoxyribonucleoside 5'-triphosphate + H2O = a 2'-deoxyribonucleoside + triphosphate + H(+). The catalysed reaction is dATP + H2O = 2'-deoxyadenosine + triphosphate + H(+). The enzyme catalyses dCTP + H2O = 2'-deoxycytidine + triphosphate + H(+). It catalyses the reaction dGTP + H2O = 2'-deoxyguanosine + triphosphate + H(+). It carries out the reaction dTTP + H2O = thymidine + triphosphate + H(+). Its activity is regulated as follows. Allosterically activated and regulated via the combined actions of GTP and dNTPs (dATP, dGTP, dTTP and dCTP): Allosteric site 1 binds GTP, while allosteric site 2 binds dNTP. Allosteric activation promotes the formation of highly active homotetramers. Its function is as follows. Protein that acts both as a host restriction factor involved in defense response to virus and as a regulator of DNA end resection at stalled replication forks. Has deoxynucleoside triphosphate (dNTPase) activity, which is required to restrict infection by viruses: dNTPase activity reduces cellular dNTP levels to levels too low for retroviral reverse transcription to occur, blocking early-stage virus replication in dendritic and other myeloid cells. Functions during S phase at stalled DNA replication forks to promote the resection of gapped or reversed forks: acts by stimulating the exonuclease activity of MRE11, activating the ATR-CHK1 pathway and allowing the forks to restart replication. Its ability to promote degradation of nascent DNA at stalled replication forks is required to prevent induction of type I interferons, thereby preventing chronic inflammation. Ability to promote DNA end resection at stalled replication forks is independent of dNTPase activity. In Gallus gallus (Chicken), this protein is Deoxynucleoside triphosphate triphosphohydrolase SAMHD1.